The primary structure comprises 254 residues: ATP-dependent L-serine kinase SbnI (254 aa).

Residue Glu20 is part of the active site. Residue Ser33 coordinates ADP. Ile57 serves as a coordination point for O-phospho-L-serine. ADP is bound by residues Asp58, Gly59, His61, and Arg62. Residues Gly59 and His61 each contribute to the O-phospho-L-serine site. Residues Trp98 and Arg229 each coordinate O-phospho-L-serine.

In terms of assembly, forms dimers and tetramers in solution. Predominantly forms dimers. Dimerization/oligomerization is not essential for kinase activity.

It carries out the reaction L-serine + ATP = O-phospho-L-serine + ADP + H(+). The protein operates within siderophore biosynthesis. Its activity is regulated as follows. Binds heme and heme binding inhibits DNA binding. Free serine kinase that uses ATP to phosphorylate L-serine to yield O-phospho-L-serine and ADP. O-phospho-L-serine serves as a substrate for SbnA and is a precursor for staphyloferrin B biosynthesis. Is also a DNA-binding regulatory protein that senses heme to control gene expression for siderophore biosynthesis. Binds to DNA within the sbnC coding region and is required for expression of genes in the sbn operon from sbnD onward. The chain is ATP-dependent L-serine kinase SbnI from Staphylococcus aureus (strain NCTC 8325 / PS 47).